Consider the following 800-residue polypeptide: DNA topoisomerase 4 subunit A (800 aa).

A Topo IIA-type catalytic domain is found at 31-495 (LPDVRDGLKP…EIEEIKIDKE (465 aa)). Tyr119 serves as the catalytic O-(5'-phospho-DNA)-tyrosine intermediate.

It belongs to the type II topoisomerase GyrA/ParC subunit family. ParC type 2 subfamily. Heterotetramer composed of ParC and ParE.

The protein localises to the cell membrane. The catalysed reaction is ATP-dependent breakage, passage and rejoining of double-stranded DNA.. Functionally, topoisomerase IV is essential for chromosome segregation. It relaxes supercoiled DNA. Performs the decatenation events required during the replication of a circular DNA molecule. In Staphylococcus aureus (strain Mu50 / ATCC 700699), this protein is DNA topoisomerase 4 subunit A.